A 151-amino-acid polypeptide reads, in one-letter code: UPAR/Ly6 domain-containing protein crok (151 aa).

The first 23 residues, 1–23 (MKTLEKYILFAIVLCCLLQLGQA), serve as a signal peptide directing secretion. Residues 24-128 (IKCWDCRSDN…KDGCNSAGIH (105 aa)) lie on the Lumenal side of the membrane. Intrachain disulfides connect C26–C68, C29–C37, C51–C85, C100–C114, and C116–C122. Residue N43 is glycosylated (N-linked (GlcNAc...) asparagine). A lipid anchor (GPI-anchor amidated serine) is attached at S124. The propeptide at 125-151 (AGIHRLGLMGVLTGTLLSVIVAHLLRQ) is removed in mature form. Residues 129 to 149 (RLGLMGVLTGTLLSVIVAHLL) traverse the membrane as a helical segment. The Cytoplasmic portion of the chain corresponds to 150–151 (RQ).

Belongs to the quiver family.

It is found in the vesicle. The protein resides in the membrane. It localises to the endomembrane system. In terms of biological role, required for septate junction assembly, possibly by organizing the preassembly and transport of septate junction proteins including dlg1/disks large 1 and Nrx-IV/Neurexin-IV. Involved in paracellular barrier functions of trachea, hindgut and salivary gland mediated by epithelial cell septate junctions. This Drosophila melanogaster (Fruit fly) protein is UPAR/Ly6 domain-containing protein crok.